The sequence spans 186 residues: Glutathione peroxidase 7 (186 aa).

The signal sequence occupies residues 1-18 (MVAAVATAWLLLWAAACA). The active site involves Cys56.

This sequence belongs to the glutathione peroxidase family.

Its subcellular location is the secreted. It catalyses the reaction 2 glutathione + H2O2 = glutathione disulfide + 2 H2O. Functionally, it protects esophageal epithelia from hydrogen peroxide-induced oxidative stress. It suppresses acidic bile acid-induced reactive oxygen species (ROS) and protects against oxidative DNA damage and double-strand breaks. This chain is Glutathione peroxidase 7 (Gpx7), found in Mus musculus (Mouse).